Reading from the N-terminus, the 281-residue chain is Glycerol uptake facilitator protein (281 aa).

At 1–5 the chain is on the cytoplasmic side; it reads MSQTS. The chain crosses the membrane as a helical span at residues 6–34; sequence TLKGQCIAEFLGTGLLIFFGVGCVAALKV. Residues 35 to 39 are Periplasmic-facing; the sequence is AGASF. Residues 40–60 form a helical membrane-spanning segment; the sequence is GQWEISVIWGLGVAMAIYLTA. At 61–63 the chain is on the cytoplasmic side; sequence GVS. The stretch at 64–67 is an intramembrane region; sequence GAHL. The short motif at 68 to 70 is the NPA 1 element; it reads NPA. The segment at residues 68–78 is an intramembrane region (helical); the sequence is NPAVTIALWLF. The Cytoplasmic portion of the chain corresponds to 79–84; sequence ACFDKR. The chain crosses the membrane as a helical span at residues 85-108; the sequence is KVIPFIVSQVAGAFCAAALVYGLY. Topologically, residues 109-143 are periplasmic; sequence YNLFFDFEQTHHIVRGSVESVDLAGTFSTYPNPHI. A helical membrane pass occupies residues 144–169; it reads NFVQAFAVEMVITAILMGLILALTDD. Residues 170–177 are Cytoplasmic-facing; the sequence is GNGVPRGP. The chain crosses the membrane as a helical span at residues 178 to 194; the sequence is LAPLLIGLLIAVIGASM. At 195-198 the chain is on the periplasmic side; that stretch reads GPLT. An intramembrane segment occupies 199–202; sequence GFAM. Positions 203–205 match the NPA 2 motif; the sequence is NPA. An intramembrane region (helical) is located at residues 203-216; that stretch reads NPARDFGPKVFAWL. At 217–231 the chain is on the periplasmic side; sequence AGWGNVAFTGGRDIP. Residues 232 to 254 traverse the membrane as a helical segment; sequence YFLVPLFGPIVGAIVGAFAYRKL. Topologically, residues 255 to 281 are cytoplasmic; the sequence is IGRHLPCDICVVEEKETTTPSEQKASL.

The protein belongs to the MIP/aquaporin (TC 1.A.8) family. Homotetramer.

The protein resides in the cell inner membrane. The catalysed reaction is glycerol(in) = glycerol(out). In terms of biological role, mediates glycerol diffusion across the cytoplasmic membrane via a pore-type mechanism. This is Glycerol uptake facilitator protein (glpF) from Escherichia coli O157:H7.